The primary structure comprises 116 residues: Tyrosine-protein phosphatase 10 (116 aa).

In terms of domain architecture, Tyrosine-protein phosphatase spans 1–116 (WRMVWEQNVS…SPTGYGPIVV (116 aa)). A substrate-binding site is contributed by Asp86.

It belongs to the protein-tyrosine phosphatase family.

It catalyses the reaction O-phospho-L-tyrosyl-[protein] + H2O = L-tyrosyl-[protein] + phosphate. The sequence is that of Tyrosine-protein phosphatase 10 (STY-10) from Styela plicata (Wrinkled sea squirt).